The sequence spans 222 residues: MKYPPSLVGLIRELSRLPGIGPKSAQRLAFYLFEQPREDIERLAGAILEAKRDLHTCPVCFNITDAERCDVCSDPTRDQSVICVVEEPGDVIAIERSGEYRGLYHVLHGALSPMNGVGPDRLQIRPLLPRVQDGMEVILATGTTVEGDATALYLQRLLEPLGAVVSRIAYGLPVGGALEYADEVTLGRALSGRRRVSEPASPPPPRRNDEEQDGAPARPPSH.

The segment at 57-72 (CPVCFNITDAERCDVC) adopts a C4-type zinc-finger fold. Positions 80–173 (SVICVVEEPG…VVSRIAYGLP (94 aa)) constitute a Toprim domain. The tract at residues 189–222 (ALSGRRRVSEPASPPPPRRNDEEQDGAPARPPSH) is disordered.

Belongs to the RecR family.

May play a role in DNA repair. It seems to be involved in an RecBC-independent recombinational process of DNA repair. It may act with RecF and RecO. The protein is Recombination protein RecR of Deinococcus geothermalis (strain DSM 11300 / CIP 105573 / AG-3a).